The primary structure comprises 442 residues: tRNA-2-methylthio-N(6)-dimethylallyladenosine synthase (442 aa).

Residues 2–120 (KKVFIRTFGC…LPKMIVDKET (119 aa)) enclose the MTTase N-terminal domain. C11, C49, C83, C157, C161, and C164 together coordinate [4Fe-4S] cluster. One can recognise a Radical SAM core domain in the interval 143-375 (RVEGGAAFVS…NEVIEAETAR (233 aa)). Residues 378–441 (QTMIGTVQRC…TFSLRGKIVE (64 aa)) form the TRAM domain.

Belongs to the methylthiotransferase family. MiaB subfamily. In terms of assembly, monomer. The cofactor is [4Fe-4S] cluster.

It localises to the cytoplasm. It carries out the reaction N(6)-dimethylallyladenosine(37) in tRNA + (sulfur carrier)-SH + AH2 + 2 S-adenosyl-L-methionine = 2-methylsulfanyl-N(6)-dimethylallyladenosine(37) in tRNA + (sulfur carrier)-H + 5'-deoxyadenosine + L-methionine + A + S-adenosyl-L-homocysteine + 2 H(+). In terms of biological role, catalyzes the methylthiolation of N6-(dimethylallyl)adenosine (i(6)A), leading to the formation of 2-methylthio-N6-(dimethylallyl)adenosine (ms(2)i(6)A) at position 37 in tRNAs that read codons beginning with uridine. In Neisseria gonorrhoeae (strain ATCC 700825 / FA 1090), this protein is tRNA-2-methylthio-N(6)-dimethylallyladenosine synthase.